A 402-amino-acid chain; its full sequence is Plasminogen activator inhibitor 1 (402 aa).

Residues 1–23 (MRMSPVFACLALGLALIFGEGSA) form the signal peptide. Residues N232, N288, and N352 are each glycosylated (N-linked (GlcNAc...) asparagine).

Belongs to the serpin family. Forms a heterodimer with TMPRSS7. Interacts with VTN. Binds LRP1B; binding is followed by internalization and degradation. Interacts with PPP1CB. In complex with PLAU/uPA, interacts with PLAUR/uPAR. Interacts with SORL1 and LRP1, either alone or in complex with PLAU; these interactions are abolished in the presence of LRPAP1/RAP. The ternary complex composed of PLAUR-PLAU-PAI1 also interacts with SORL1. Interacts with PLAT/tPA. Also interacts with SORL1, when complexed to PLAT/tPA. As to expression, vascular endothelial cells may be the primary site of synthesis of plasma PAI1.

It is found in the secreted. In terms of biological role, serine protease inhibitor. Inhibits TMPRSS7. Is a primary inhibitor of tissue-type plasminogen activator (PLAT) and urokinase-type plasminogen activator (PLAU). As PLAT inhibitor, it is required for fibrinolysis down-regulation and is responsible for the controlled degradation of blood clots. As PLAU inhibitor, it is involved in the regulation of cell adhesion and spreading. Acts as a regulator of cell migration, independently of its role as protease inhibitor. It is required for stimulation of keratinocyte migration during cutaneous injury repair. It is involved in cellular and replicative senescence. Plays a role in alveolar type 2 cells senescence in the lung. Is involved in the regulation of cementogenic differentiation of periodontal ligament stem cells, and regulates odontoblast differentiation and dentin formation during odontogenesis. This chain is Plasminogen activator inhibitor 1 (SERPINE1), found in Bos taurus (Bovine).